A 616-amino-acid chain; its full sequence is Membrane protein insertase YidC (616 aa).

Residues methionine 8–glycine 28 form a helical membrane-spanning segment. Residues arginine 33–aspartate 85 are disordered. 2 stretches are compositionally biased toward low complexity: residues glutamine 36–alanine 51 and glycine 62–proline 80. The next 4 membrane-spanning stretches (helical) occupy residues leucine 386–leucine 406, tryptophan 460–isoleucine 480, tyrosine 516–methionine 536, and phenylalanine 551–isoleucine 571.

Belongs to the OXA1/ALB3/YidC family. Type 1 subfamily. In terms of assembly, interacts with the Sec translocase complex via SecD. Specifically interacts with transmembrane segments of nascent integral membrane proteins during membrane integration.

The protein localises to the cell inner membrane. Its function is as follows. Required for the insertion and/or proper folding and/or complex formation of integral membrane proteins into the membrane. Involved in integration of membrane proteins that insert both dependently and independently of the Sec translocase complex, as well as at least some lipoproteins. Aids folding of multispanning membrane proteins. This Methylorubrum extorquens (strain PA1) (Methylobacterium extorquens) protein is Membrane protein insertase YidC.